The primary structure comprises 209 residues: Urease accessory protein UreE (209 aa).

Basic and acidic residues predominate over residues 170–196 (EHHGHSHSHSHDHDHDHDHDHDHDHQH). Residues 170-209 (EHHGHSHSHSHDHDHDHDHDHDHDHQHGPSCSHGHHHGHR) are disordered.

This sequence belongs to the UreE family.

The protein resides in the cytoplasm. Its function is as follows. Involved in urease metallocenter assembly. Binds nickel. Probably functions as a nickel donor during metallocenter assembly. This Burkholderia mallei (strain NCTC 10247) protein is Urease accessory protein UreE.